Consider the following 92-residue polypeptide: Small ribosomal subunit protein bS18 (92 aa).

Positions Met1–Pro27 are disordered. The span at Pro12 to Lys22 shows a compositional bias: basic residues.

The protein belongs to the bacterial ribosomal protein bS18 family. As to quaternary structure, part of the 30S ribosomal subunit. Forms a tight heterodimer with protein bS6.

Binds as a heterodimer with protein bS6 to the central domain of the 16S rRNA, where it helps stabilize the platform of the 30S subunit. The sequence is that of Small ribosomal subunit protein bS18 from Deinococcus deserti (strain DSM 17065 / CIP 109153 / LMG 22923 / VCD115).